Reading from the N-terminus, the 257-residue chain is Outer membrane protein Omp26La (257 aa).

Residues 1 to 19 (MKKIALFITASLIAGNTLA) form the signal peptide.

It belongs to the MipA/OmpV family.

The protein localises to the cell outer membrane. This Vibrio anguillarum (Listonella anguillarum) protein is Outer membrane protein Omp26La.